We begin with the raw amino-acid sequence, 392 residues long: MAKQSTLGSKELNPRQVEENNLLATKLSEIYKKWGYQEVAPPQVEGLKTLMAGGGIDSKEILKLVIDEPVGLRPEMTASIARAASTRYVAEPRPLRLWASGTIFKSREESDGKIVIDESLQSGVELFGIEGMEIEVELLYLLIESLKKLNIDESSMPILLINHISLMELIISKFSKSSKEKVTDILSNFDLIEIEKLELDFDERNTLKLLQELRGSPRNVIKTLESLYGNNKILDSLTKIFNIIEPISNKYNIQLQLDPTFKPHYELYTGIVFELVCNTRETPVVIARGGRYDELVKMFNENPEDEIAAGFSYSIDKIRELNTRLETFDTNPERILVAYGPNKTIKDAIECQAKLHEKGYVAIIELNSCINEDHAMKLVNQRKCTKLKWINS.

Belongs to the class-II aminoacyl-tRNA synthetase family. HisZ subfamily. As to quaternary structure, heteromultimer composed of HisG and HisZ subunits.

It is found in the cytoplasm. It functions in the pathway amino-acid biosynthesis; L-histidine biosynthesis; L-histidine from 5-phospho-alpha-D-ribose 1-diphosphate: step 1/9. Its function is as follows. Required for the first step of histidine biosynthesis. May allow the feedback regulation of ATP phosphoribosyltransferase activity by histidine. This chain is ATP phosphoribosyltransferase regulatory subunit, found in Prochlorococcus marinus (strain MIT 9211).